Here is a 505-residue protein sequence, read N- to C-terminus: Probable RNA exonuclease NGL3 (505 aa).

Disordered stretches follow at residues 1–75 (MDSQ…FPTP) and 334–369 (RNGEESDQDDEECDEKSRGEGHSDQPQNPKPESFTA). Over residues 10 to 23 (SPSQKESSSTSGLV) the composition is skewed to polar residues. Residues 36 to 54 (HRDQLSVDQIKKIREERAQ) show a composition bias toward basic and acidic residues. A Phosphoserine modification is found at Ser62. The segment covering 338–347 (ESDQDDEECD) has biased composition (acidic residues).

Belongs to the CCR4/nocturin family.

The chain is Probable RNA exonuclease NGL3 (NGL3) from Saccharomyces cerevisiae (strain ATCC 204508 / S288c) (Baker's yeast).